We begin with the raw amino-acid sequence, 406 residues long: (R)-benzylsuccinyl-CoA dehydrogenase (406 aa).

This sequence belongs to the acyl-CoA dehydrogenase family. As to quaternary structure, homotetramer. It depends on FAD as a cofactor.

The catalysed reaction is (R)-2-benzylsuccinyl-CoA + oxidized [electron-transfer flavoprotein] + H(+) = (E)-2-benzylidenesuccinyl-CoA + reduced [electron-transfer flavoprotein]. It functions in the pathway xenobiotic degradation; toluene degradation. With respect to regulation, inhibited by (S)-benzylsuccinyl-CoA. In terms of biological role, catalyzes the oxidation of benzylsuccinyl-CoA to benzylidenesuccinyl-CoA. The polypeptide is (R)-benzylsuccinyl-CoA dehydrogenase (bbsG) (Thauera aromatica).